We begin with the raw amino-acid sequence, 90 residues long: Probable Fe(2+)-trafficking protein (90 aa).

The protein belongs to the Fe(2+)-trafficking protein family. As to quaternary structure, monomer.

Could be a mediator in iron transactions between iron acquisition and iron-requiring processes, such as synthesis and/or repair of Fe-S clusters in biosynthetic enzymes. This is Probable Fe(2+)-trafficking protein from Sodalis glossinidius (strain morsitans).